A 455-amino-acid polypeptide reads, in one-letter code: Bifunctional protein GlmU (455 aa).

The segment at 1-230 (MANRFAVILA…FDETIGINDR (230 aa)) is pyrophosphorylase. Residues 9-12 (LAAG), Lys23, Gln73, and 78-79 (GT) contribute to the UDP-N-acetyl-alpha-D-glucosamine site. Mg(2+) is bound at residue Asp103. Residues Gly140, Glu155, Asn170, and Asn228 each coordinate UDP-N-acetyl-alpha-D-glucosamine. Residue Asn228 coordinates Mg(2+). Residues 231–251 (IALAEAEKIMKKRINEQHMRN) are linker. The interval 252-455 (GVSIIDPEQT…KEEYASKFKK (204 aa)) is N-acetyltransferase. Residues Arg333 and Lys351 each coordinate UDP-N-acetyl-alpha-D-glucosamine. Residue His363 is the Proton acceptor of the active site. Positions 366 and 377 each coordinate UDP-N-acetyl-alpha-D-glucosamine. Residues 386-387 (NY), Ala423, and Arg440 contribute to the acetyl-CoA site.

It in the N-terminal section; belongs to the N-acetylglucosamine-1-phosphate uridyltransferase family. This sequence in the C-terminal section; belongs to the transferase hexapeptide repeat family. As to quaternary structure, homotrimer. It depends on Mg(2+) as a cofactor.

It is found in the cytoplasm. The enzyme catalyses alpha-D-glucosamine 1-phosphate + acetyl-CoA = N-acetyl-alpha-D-glucosamine 1-phosphate + CoA + H(+). It carries out the reaction N-acetyl-alpha-D-glucosamine 1-phosphate + UTP + H(+) = UDP-N-acetyl-alpha-D-glucosamine + diphosphate. It participates in nucleotide-sugar biosynthesis; UDP-N-acetyl-alpha-D-glucosamine biosynthesis; N-acetyl-alpha-D-glucosamine 1-phosphate from alpha-D-glucosamine 6-phosphate (route II): step 2/2. Its pathway is nucleotide-sugar biosynthesis; UDP-N-acetyl-alpha-D-glucosamine biosynthesis; UDP-N-acetyl-alpha-D-glucosamine from N-acetyl-alpha-D-glucosamine 1-phosphate: step 1/1. It functions in the pathway bacterial outer membrane biogenesis; LPS lipid A biosynthesis. Catalyzes the last two sequential reactions in the de novo biosynthetic pathway for UDP-N-acetylglucosamine (UDP-GlcNAc). The C-terminal domain catalyzes the transfer of acetyl group from acetyl coenzyme A to glucosamine-1-phosphate (GlcN-1-P) to produce N-acetylglucosamine-1-phosphate (GlcNAc-1-P), which is converted into UDP-GlcNAc by the transfer of uridine 5-monophosphate (from uridine 5-triphosphate), a reaction catalyzed by the N-terminal domain. The protein is Bifunctional protein GlmU of Oceanobacillus iheyensis (strain DSM 14371 / CIP 107618 / JCM 11309 / KCTC 3954 / HTE831).